Reading from the N-terminus, the 384-residue chain is WD repeat-containing protein 55 (384 aa).

Residues 1-33 (MDPTCQESPAEDSNNEEDLDSTKAAPRIRDTPE) form a disordered region. Residues 9–19 (PAEDSNNEEDL) show a composition bias toward acidic residues. 7 WD repeats span residues 36–75 (VLEA…GETK), 82–121 (HHLK…LERR), 125–163 (AHSA…PLMD), 166–205 (QHEE…FELL), 208–247 (PQSG…ATSD), 250–289 (ALRA…VVGT), and 293–332 (HAGE…TVVV). Phosphoserine occurs at positions 354 and 383. The disordered stretch occupies residues 362-384 (LREDEEEAKAPEEVSGESDDDSD). Positions 375–384 (VSGESDDDSD) are enriched in acidic residues.

This sequence belongs to the WD repeat WDR55 family.

It localises to the nucleus. The protein localises to the nucleolus. The protein resides in the cytoplasm. In terms of biological role, nucleolar protein that acts as a modulator of rRNA synthesis. Plays a central role during organogenesis. In Rattus norvegicus (Rat), this protein is WD repeat-containing protein 55 (Wdr55).